The primary structure comprises 364 residues: Peptide chain release factor 2 (364 aa).

Residue Gln251 is modified to N5-methylglutamine.

The protein belongs to the prokaryotic/mitochondrial release factor family. Post-translationally, methylated by PrmC. Methylation increases the termination efficiency of RF2.

It localises to the cytoplasm. In terms of biological role, peptide chain release factor 2 directs the termination of translation in response to the peptide chain termination codons UGA and UAA. This Campylobacter hominis (strain ATCC BAA-381 / DSM 21671 / CCUG 45161 / LMG 19568 / NCTC 13146 / CH001A) protein is Peptide chain release factor 2.